A 717-amino-acid chain; its full sequence is Pentatricopeptide repeat-containing protein At1g53600, mitochondrial (717 aa).

The N-terminal 47 residues, 1 to 47, are a transit peptide targeting the mitochondrion; the sequence is MVMRPISNKGLIYRHNICLRCNSTLAVSNHEPITQKTRNFLETTTTS. PPR repeat units follow at residues 49–79, 80–110, 111–142, 143–173, 176–206, 207–241, 242–272, 274–308, 309–339, 340–374, 375–401, 402–436, 437–471, 472–502, 503–537, 538–568, and 574–604; these read AIFQ…MSNR, SIVS…MPVR, VTTS…IPEK, NAVS…TPVK, DSVA…MAVK, EVVS…NVIT, WTAM…GDVK, NSNT…PLEF, DLFL…MKNK, DSVS…DMVS, WTDM…MPEK, DNIT…EVCP, NSYT…NIVN, DLSV…ISEP, NIVS…GKEP, NGVT…MKSS, and GPDH…MPCK. The tract at residues 609-684 is type E motif; the sequence is VWGSLLSASK…DPGSSWIILK (76 aa). Residues 685 to 715 form a type E(+) motif region; that stretch reads GEVHNFLAGDESQLNLEEIGFTLKMIRKEME.

The protein belongs to the PPR family. PCMP-E subfamily.

The protein resides in the mitochondrion. This is Pentatricopeptide repeat-containing protein At1g53600, mitochondrial (PCMP-E63) from Arabidopsis thaliana (Mouse-ear cress).